The primary structure comprises 504 residues: L-carnitine/gamma-butyrobetaine antiporter (504 aa).

Transmembrane regions (helical) follow at residues 10 to 30 (IEPK…WLTV), 51 to 71 (WGWA…WLVF), 92 to 112 (IFMM…SIEI), 143 to 163 (GPLP…FFFV), 195 to 215 (FYLV…TPLV), 231 to 251 (LDAI…ACGL), 263 to 283 (SYLS…SFIM), 316 to 336 (WTVF…IFLA), 347 to 367 (LCFG…TVLG), 398 to 418 (WAAL…CFIA), 446 to 466 (LLVR…LLAL), and 475 to 495 (AIIA…LSFI).

Belongs to the BCCT transporter (TC 2.A.15) family. CaiT subfamily. As to quaternary structure, homotrimer.

Its subcellular location is the cell inner membrane. The catalysed reaction is 4-(trimethylamino)butanoate(in) + (R)-carnitine(out) = 4-(trimethylamino)butanoate(out) + (R)-carnitine(in). It functions in the pathway amine and polyamine metabolism; carnitine metabolism. In terms of biological role, catalyzes the exchange of L-carnitine for gamma-butyrobetaine. The chain is L-carnitine/gamma-butyrobetaine antiporter from Escherichia coli O6:K15:H31 (strain 536 / UPEC).